The primary structure comprises 1174 residues: Male determiner protein Mdmd(Y) (1174 aa).

Over residues 1 to 15 (MNATDAESRKPENKP) the composition is skewed to basic and acidic residues. 3 disordered regions span residues 1–51 (MNAT…SGQR), 79–109 (RKDG…HPVE), and 136–259 (KQLS…LRRS). Residues 16–35 (SSESSSSGSTSGSSDGEVSS) show a composition bias toward low complexity. A compositionally biased stretch (polar residues) spans 36–47 (KTYFKNNKSKVL). Positions 79 to 92 (RKDGSNEMLPKEDS) are enriched in basic and acidic residues. The segment covering 138 to 153 (LSAYRSRSRSTRLSYS) has biased composition (low complexity). Residues 167 to 180 (SRYKKSVLRNRRTS) show a composition bias toward basic residues. Over residues 183 to 200 (HGRDSSTTKRSVSRDKDN) the composition is skewed to basic and acidic residues. Over residues 201-223 (RLRRRIGSSRSHTRSHSRFRRSE) the composition is skewed to basic residues. Residues 235–259 (RSQERRHERRRSMSSDYERIALRRS) are compositionally biased toward basic and acidic residues. The region spanning 348–531 (KKYIHGYINK…KVLFQVRRDG (184 aa)) is the MIF4G domain. Residues 597–608 (DSDGSFGSGSNS) are compositionally biased toward low complexity. The tract at residues 597-616 (DSDGSFGSGSNSETALSDCD) is disordered. In terms of domain architecture, MI spans 641-757 (ALRRTIYLTL…SWDVLDCIKL (117 aa)). Over residues 840–857 (SAPSSSSSSSLSSELSAP) the composition is skewed to low complexity. Disordered regions lie at residues 840 to 1045 (SAPS…SRTK) and 1089 to 1135 (KGGP…SREY). Composition is skewed to basic residues over residues 869–886 (KKKH…KNPS) and 895–909 (IVGK…KTIK). Over residues 910–924 (RRTDKDNSSSKDNFL) the composition is skewed to basic and acidic residues. Low complexity predominate over residues 926–957 (SESSSNESISLDSLSSELFAPSSYSSSESSND). Residues 963–1001 (KHKGKNKKMTKKKNPSNKREKTKKKLSKNKKAPNKNTKK) are compositionally biased toward basic residues. Residues 1010–1020 (SSESSISESKS) show a composition bias toward low complexity. Over residues 1034–1045 (RKKRVTSKSRTK) the composition is skewed to basic residues. Basic and acidic residues predominate over residues 1089-1118 (KGGPNCRKDNYGNRQNHEISQRHDSEIKRR). Residues 1119–1130 (REERKKRHHEKN) are compositionally biased toward basic residues.

It belongs to the CWC22 family. Component of the spliceosome C complex.

The protein localises to the nucleus speckle. Male determiner protein (M-factor) that controls male somatic sexual differentiation. Acts as a dominant factor that regulates the mRNA splicing of transformer (tra) and doublesex (dsx) transcripts and promotes expression of male splice forms of tra and dsx. Probably acts as a component of the spliceosome C complex required for mRNA splicing factor and exon-junction complex (EJC) assembly. Hinders eIF4AIII from non-specifically binding RNA and escorts it to the splicing machinery to promote EJC assembly on mature mRNAs. This chain is Male determiner protein Mdmd(Y), found in Musca domestica (House fly).